The following is a 307-amino-acid chain: 2-haloacid dehalogenase, configuration-inverting (307 aa).

The protein belongs to the HAD-like hydrolase superfamily. S-2-haloalkanoic acid dehalogenase family. As to quaternary structure, homodimer.

It carries out the reaction an (S)-2-haloacid + H2O = a (2R)-2-hydroxycarboxylate + a halide anion + H(+). The enzyme catalyses an (R)-2-haloacid + H2O = a (2S)-2-hydroxycarboxylate + a halide anion + H(+). In terms of biological role, dehalogenates both (S)- and (R)-2-haloalkanoic acids to the corresponding (R)- and (S)-hydroxyalkanoic acids, respectively, with inversion of configuration at C-2. Acts on 2-haloalkanoic acids whose carbon chain lengths are five or less. This chain is 2-haloacid dehalogenase, configuration-inverting, found in Pseudomonas sp. (strain 113).